We begin with the raw amino-acid sequence, 530 residues long: 6-phosphofructo-2-kinase/fructose-2,6-bisphosphatase 2 (530 aa).

A compositionally biased stretch (polar residues) spans 1 to 15 (MSGASSSEQNNNSYE). Positions 1–21 (MSGASSSEQNNNSYETKPPNL) are disordered. S2 is subject to N-acetylserine. The tract at residues 2–248 (SGASSSEQNN…VYYLMNIHVQ (247 aa)) is 6-phosphofructo-2-kinase. S29 carries the post-translational modification Phosphoserine; by PKA. 45–53 (GLPARGKTY) serves as a coordination point for ATP. Residues R78 and R102 each contribute to the beta-D-fructose 6-phosphate site. The active site involves D128. Beta-D-fructose 6-phosphate-binding residues include T130 and R136. C158 is a catalytic residue. ATP is bound at residue 167–172 (NILEVK). Beta-D-fructose 6-phosphate contacts are provided by K172, R193, and Y197. The fructose-2,6-bisphosphatase stretch occupies residues 249-530 (PRTIYLCRHG…PPALASCPCH (282 aa)). R256 provides a ligand contact to beta-D-fructose 2,6-bisphosphate. Residue H257 is the Tele-phosphohistidine intermediate of the active site. G269 lines the beta-D-fructose 2,6-bisphosphate pocket. E326 functions as the Proton donor/acceptor in the catalytic mechanism. Beta-D-fructose 2,6-bisphosphate is bound by residues Y337, R351, K355, Y366, Q392, and R396. 348-351 (FALR) provides a ligand contact to ATP. ATP-binding positions include 392–396 (QAVMR) and Y428. Positions 446-512 (RDKPTNNFPK…GPTSRRPKSH (67 aa)) are disordered. Residues 450-476 (TNNFPKNQTPVRMRRNSFTPLSSSNTI) are compositionally biased toward polar residues. S466 carries the phosphoserine; by AMPK and PKA modification. T468 is modified (phosphothreonine). T475 is subject to Phosphothreonine; by PKC. Residues S483 and S493 each carry the phosphoserine modification.

This sequence in the C-terminal section; belongs to the phosphoglycerate mutase family. In terms of assembly, homodimer. Forms a heterodimer with PFKFB3. In terms of processing, phosphorylation by AMPK stimulates activity.

It carries out the reaction beta-D-fructose 2,6-bisphosphate + H2O = beta-D-fructose 6-phosphate + phosphate. It catalyses the reaction beta-D-fructose 6-phosphate + ATP = beta-D-fructose 2,6-bisphosphate + ADP + H(+). With respect to regulation, phosphorylation results in the activation of the kinase activity. Synthesis and degradation of fructose 2,6-bisphosphate. This chain is 6-phosphofructo-2-kinase/fructose-2,6-bisphosphatase 2 (PFKFB2), found in Pongo abelii (Sumatran orangutan).